A 132-amino-acid chain; its full sequence is Small ribosomal subunit protein uS8 (132 aa).

Belongs to the universal ribosomal protein uS8 family. In terms of assembly, part of the 30S ribosomal subunit. Contacts proteins S5 and S12.

In terms of biological role, one of the primary rRNA binding proteins, it binds directly to 16S rRNA central domain where it helps coordinate assembly of the platform of the 30S subunit. The polypeptide is Small ribosomal subunit protein uS8 (Tropheryma whipplei (strain Twist) (Whipple's bacillus)).